Here is a 204-residue protein sequence, read N- to C-terminus: Thymidylate kinase (204 aa).

Residue Gly12–Ser19 participates in ATP binding.

The protein belongs to the thymidylate kinase family.

It catalyses the reaction dTMP + ATP = dTDP + ADP. In terms of biological role, phosphorylation of dTMP to form dTDP in both de novo and salvage pathways of dTTP synthesis. The polypeptide is Thymidylate kinase (Thiobacillus denitrificans (strain ATCC 25259 / T1)).